The chain runs to 166 residues: Small ribosomal subunit protein uS5 (166 aa).

An S5 DRBM domain is found at 11–74; the sequence is LEDRVVAINR…DAARKNLIEV (64 aa).

This sequence belongs to the universal ribosomal protein uS5 family. As to quaternary structure, part of the 30S ribosomal subunit. Contacts proteins S4 and S8.

Its function is as follows. With S4 and S12 plays an important role in translational accuracy. Functionally, located at the back of the 30S subunit body where it stabilizes the conformation of the head with respect to the body. The chain is Small ribosomal subunit protein uS5 from Ligilactobacillus salivarius (strain UCC118) (Lactobacillus salivarius).